We begin with the raw amino-acid sequence, 129 residues long: N16.2 matrix protein (129 aa).

An N-terminal signal peptide occupies residues 1–23; sequence MKCTLRWTITALVLLGICHLARP. 5 repeat units span residues 91–92, 93–94, 95–96, 97–98, and 99–100. The tract at residues 91–100 is 5 X 2 AA tandem repeats of N-G; the sequence is NGNGDGNGNG.

It belongs to the N16 matrix protein family. As to quaternary structure, heterooligomer; disulfide-linked. Pif97, Pif80, N16 and other proteins form a complex. In terms of tissue distribution, component of conchiolin, the organic matrix of nacre. Expressed at extremely high levels in the dorsal region of the mantle, which region may be responsible for the nacreous layer formation, but only in trace amounts at the mantle edge, which region may be responsible for the prismatic layer formation.

It is found in the secreted. The protein localises to the extracellular space. The protein resides in the extracellular matrix. Functionally, may be specifically involved in the formation of the nacreous layer. This Pinctada fucata (Akoya pearl oyster) protein is N16.2 matrix protein.